Here is a 276-residue protein sequence, read N- to C-terminus: Probable NADH-ubiquinone oxidoreductase 30.4 kDa subunit, mitochondrial (276 aa).

The disordered stretch occupies residues 248–276 (EPVGEGKDFTPESFKLPTPQPEPEQEEKK).

The protein belongs to the complex I 30 kDa subunit family. As to quaternary structure, complex I is composed of about 30 different subunits. This is a component of the iron-sulfur protein fraction.

It localises to the mitochondrion inner membrane. It catalyses the reaction a ubiquinone + NADH + 5 H(+)(in) = a ubiquinol + NAD(+) + 4 H(+)(out). Its function is as follows. Core subunit of the mitochondrial membrane respiratory chain NADH dehydrogenase (Complex I) that is believed to belong to the minimal assembly required for catalysis. Complex I functions in the transfer of electrons from NADH to the respiratory chain. The immediate electron acceptor for the enzyme is believed to be ubiquinone. Essential for N-alkane assimilation. This chain is Probable NADH-ubiquinone oxidoreductase 30.4 kDa subunit, mitochondrial (ALI1), found in Candida maltosa (Yeast).